A 529-amino-acid polypeptide reads, in one-letter code: Bifunctional purine biosynthesis protein PurH (529 aa).

An MGS-like domain is found at 1–148; sequence MQQRRPVRRA…KNHKDVAIVV (148 aa). N6-acetyllysine is present on Lys-287.

Belongs to the PurH family.

It catalyses the reaction (6R)-10-formyltetrahydrofolate + 5-amino-1-(5-phospho-beta-D-ribosyl)imidazole-4-carboxamide = 5-formamido-1-(5-phospho-D-ribosyl)imidazole-4-carboxamide + (6S)-5,6,7,8-tetrahydrofolate. The enzyme catalyses IMP + H2O = 5-formamido-1-(5-phospho-D-ribosyl)imidazole-4-carboxamide. It participates in purine metabolism; IMP biosynthesis via de novo pathway; 5-formamido-1-(5-phospho-D-ribosyl)imidazole-4-carboxamide from 5-amino-1-(5-phospho-D-ribosyl)imidazole-4-carboxamide (10-formyl THF route): step 1/1. The protein operates within purine metabolism; IMP biosynthesis via de novo pathway; IMP from 5-formamido-1-(5-phospho-D-ribosyl)imidazole-4-carboxamide: step 1/1. This Escherichia coli O8 (strain IAI1) protein is Bifunctional purine biosynthesis protein PurH.